The chain runs to 395 residues: Multidrug resistance protein MdtL (395 aa).

12 helical membrane-spanning segments follow: residues 4–24, 42–62, 69–89, 93–113, 131–151, 158–178, 217–237, 247–267, 271–291, 295–315, 328–350, and 355–377; these read FLLC…MYLV, IAFS…GKIA, PVAI…SRAS, LFLS…VVAF, LLNG…HLIM, SLFY…LFIL, VSVI…VMGF, ALTA…LGLF, TLML…SLAH, VTLF…GVAM, VASS…LAAI, and AMNM…IFSV.

It belongs to the major facilitator superfamily. DHA1 family. MdtL (TC 2.A.1.2.22) subfamily.

It localises to the cell inner membrane. The sequence is that of Multidrug resistance protein MdtL from Salmonella schwarzengrund (strain CVM19633).